A 454-amino-acid polypeptide reads, in one-letter code: Epoxide hydrolase 1 (454 aa).

The chain crosses the membrane as a helical span at residues 1-21 (MWLEILLASVLGFVIYWFVSK). Residues 22–454 (DKEETLLLGD…RKFMGLLEQQ (433 aa)) lie on the Cytoplasmic side of the membrane. The active-site Nucleophile is the aspartate 226. Arginine 294 is modified (dimethylated arginine). Tyrosine 373 functions as the Proton donor in the catalytic mechanism. The active-site Proton acceptor is the histidine 430.

This sequence belongs to the peptidase S33 family.

It is found in the microsome membrane. The protein resides in the endoplasmic reticulum membrane. The enzyme catalyses cis-stilbene oxide + H2O = (1R,2R)-hydrobenzoin. It carries out the reaction 1-(4-methoxyphenyl)-N-methyl-N-[(3-methyloxetan-3-yl)methyl]methanamine + H2O = 2-{[(4-methoxybenzyl)(methyl)amino]methyl}-2-methylpropane-1,3-diol. The catalysed reaction is 8,9-epoxy-(5Z,11Z,14Z)-eicosatrienoate + H2O = 8,9-dihydroxy-(5Z,11Z,14Z)-eicosatrienoate. It catalyses the reaction 11,12-epoxy-(5Z,8Z,14Z)-eicosatrienoate + H2O = 11,12-dihydroxy-(5Z,8Z,14Z)-eicosatrienoate. The enzyme catalyses 2-(5Z,8Z,11Z,14Z-eicosatetraenoyl)-glycerol + H2O = glycerol + (5Z,8Z,11Z,14Z)-eicosatetraenoate + H(+). Inhibited by 10-hydroxystearamide and methoxy-arachidonyl fluorophosphate. In terms of biological role, biotransformation enzyme that catalyzes the hydrolysis of arene and aliphatic epoxides to less reactive and more water soluble dihydrodiols by the trans addition of water. May play a role in the metabolism of endogenous lipids such as epoxide-containing fatty acids. Metabolizes the abundant endocannabinoid 2-arachidonoylglycerol (2-AG) to free arachidonic acid (AA) and glycerol. Binds 20(S)-hydroxycholesterol (20(S)-OHC). The sequence is that of Epoxide hydrolase 1 (EPHX1) from Sus scrofa (Pig).